Consider the following 286-residue polypeptide: MTAQNIDGTLISQTVRSEVAARVKARVAAGLRAPGLAVVLVGEDPASQVYVGSKRRACEEVGFVSKSFDLPASTSEEELLALIDELNNDNEIDGILVQLPLPAGIDTTHVLERIHPEKDVDGFHPYNVGRLAQRIPKLRSCTPKGIITLLDRYNIELRGKHAVVVGASNIVGRPMTLELLLAGCTTTTCHRFTKDLESHVRQADVVVVAVGKPNFIPGEWIKKGAVVVDVGINRLDSGKLVGDVEYDKARESASFITPVPGGVGPMTVASLIENTMLACEQFHTEQ.

Residues 166-168 and Ile-232 contribute to the NADP(+) site; that span reads GAS.

It belongs to the tetrahydrofolate dehydrogenase/cyclohydrolase family. Homodimer.

It catalyses the reaction (6R)-5,10-methylene-5,6,7,8-tetrahydrofolate + NADP(+) = (6R)-5,10-methenyltetrahydrofolate + NADPH. The enzyme catalyses (6R)-5,10-methenyltetrahydrofolate + H2O = (6R)-10-formyltetrahydrofolate + H(+). Its pathway is one-carbon metabolism; tetrahydrofolate interconversion. Catalyzes the oxidation of 5,10-methylenetetrahydrofolate to 5,10-methenyltetrahydrofolate and then the hydrolysis of 5,10-methenyltetrahydrofolate to 10-formyltetrahydrofolate. The chain is Bifunctional protein FolD from Vibrio parahaemolyticus serotype O3:K6 (strain RIMD 2210633).